The primary structure comprises 516 residues: MVIVGGGTAGWMTAAYLKTAFGDRLSITVVESSRIGTIGVGEATFSDIQHFFQFLNLREQDWMPACNATYKLGIRFENWRHVGHHFYQPFEQIRPVYGFPLTDWWLHDAPTDRFDTDCFVMPNLCEAGRSPRHLDGTLADEDFVEEGDELANRTMSEHQGKSQFPYAYHFEAALLAKFLTGYAVDRGVEHVVDDVLDVRLDQRGWIEHVVTAEHGEIHGDLFVDCTGFRGLLLNKALGVPFVSYQDTLPNDSAVALQVPLDMQRRGIVPNTTATAREAGWIWTIPLFGRVGTGYVYAKDYLSPEEAERTLREFVGPAAADVEANHIRMRIGRSQESWRNNCVAIGLSSGFVEPLESTGIFFIHHAIEQLVKHFPAADWNPKSRDMYNSAVAHVMDGIREFLVIHYRGAARADNQYWRDTKTRPLPDGLAERIECWQTQLPDTETIYPYYHGLPPYSYMCILMGGGAIRTPASAALALTDQGAAQKEFAAVRDRAAQLRDTLPSHYEYLARMRGLDV.

5 residues coordinate FAD: glycine 6, threonine 8, alanine 9, glutamate 42, and alanine 43. Residue lysine 71 is part of the active site. Valine 195 contacts FAD. Residues threonine 357 and glycine 358 each coordinate chloride. Isoleucine 359 is an FAD binding site.

It belongs to the flavin-dependent halogenase family. Bacterial tryptophan halogenase subfamily.

The enzyme catalyses 7-chloro-L-tryptophan + FADH2 + chloride + O2 = 6,7-dichloro-L-tryptophan + FAD + 2 H2O. In terms of biological role, involved in the biosynthesis of kutznerides, actinomycete-derived antifungal and antimicrobial cyclic hexadepsipeptides. Together with KtzQ, catalyzes the regiospecific dichlorination of L-tryptophan (L-Trp) to produce 6,7-dichloro-L-tryptophan. KtzR catalyzes the chlorination of 7-chloro-L-tryptophan at C6 position to yield 6,7-dichloro-L-tryptophan. Can also use L-Trp as substrate and form 6-chloro-L-tryptophan, but has a 120-fold preference for 7-chloro-L-tryptophan over L-Trp. Cannot use piperazic acid or gamma,delta-dehydropiperazic acid. The protein is 7-chloro-L-tryptophan 6-halogenase KtzR of Kutzneria sp. (strain 744).